A 117-amino-acid polypeptide reads, in one-letter code: Prefoldin subunit beta (117 aa).

It belongs to the prefoldin subunit beta family. As to quaternary structure, heterohexamer of two alpha and four beta subunits.

It is found in the cytoplasm. Functionally, molecular chaperone capable of stabilizing a range of proteins. Seems to fulfill an ATP-independent, HSP70-like function in archaeal de novo protein folding. The protein is Prefoldin subunit beta of Methanococcoides burtonii (strain DSM 6242 / NBRC 107633 / OCM 468 / ACE-M).